A 301-amino-acid chain; its full sequence is Light-independent protochlorophyllide reductase iron-sulfur ATP-binding protein (301 aa).

A disordered region spans residues 1-26 (MSNGSVPVSGIGGRGDGEGSSQVHME). Residues 44–49 (GIGKST) and Lys73 contribute to the ATP site. Ser48 provides a ligand contact to Mg(2+). [4Fe-4S] cluster is bound by residues Cys129 and Cys163. An ATP-binding site is contributed by 214-215 (NR).

The protein belongs to the NifH/BchL/ChlL family. As to quaternary structure, homodimer. Protochlorophyllide reductase is composed of three subunits; BchL, BchN and BchB. [4Fe-4S] cluster is required as a cofactor.

It carries out the reaction chlorophyllide a + oxidized 2[4Fe-4S]-[ferredoxin] + 2 ADP + 2 phosphate = protochlorophyllide a + reduced 2[4Fe-4S]-[ferredoxin] + 2 ATP + 2 H2O. The protein operates within porphyrin-containing compound metabolism; bacteriochlorophyll biosynthesis (light-independent). In terms of biological role, component of the dark-operative protochlorophyllide reductase (DPOR) that uses Mg-ATP and reduced ferredoxin to reduce ring D of protochlorophyllide (Pchlide) to form chlorophyllide a (Chlide). This reaction is light-independent. The L component serves as a unique electron donor to the NB-component of the complex, and binds Mg-ATP. The protein is Light-independent protochlorophyllide reductase iron-sulfur ATP-binding protein of Halorhodospira halophila (strain DSM 244 / SL1) (Ectothiorhodospira halophila (strain DSM 244 / SL1)).